The chain runs to 1011 residues: Probable beta-galactosidase E (1011 aa).

An N-terminal signal peptide occupies residues 1–19; the sequence is MKSLLKRLIALAAAYSVAA. Residues Y92, N136, A137, E138, and N195 each contribute to the substrate site. E196 acts as the Proton donor in catalysis. A glycan (N-linked (GlcNAc...) asparagine) is linked at N202. Y261 lines the substrate pocket. The cysteines at positions 267 and 316 are disulfide-linked. The active-site Nucleophile is E299. Residue Y365 coordinates substrate. Residues N406, N423, N446, N455, N588, N622, N704, N745, N759, N772, N778, and N913 are each glycosylated (N-linked (GlcNAc...) asparagine).

Belongs to the glycosyl hydrolase 35 family.

It is found in the secreted. It catalyses the reaction Hydrolysis of terminal non-reducing beta-D-galactose residues in beta-D-galactosides.. Its function is as follows. Cleaves beta-linked terminal galactosyl residues from gangliosides, glycoproteins, and glycosaminoglycans. The polypeptide is Probable beta-galactosidase E (lacE) (Aspergillus fumigatus (strain CBS 144.89 / FGSC A1163 / CEA10) (Neosartorya fumigata)).